A 372-amino-acid polypeptide reads, in one-letter code: Phospho-N-acetylmuramoyl-pentapeptide-transferase (372 aa).

The next 10 membrane-spanning stretches (helical) occupy residues 2–22 (LVWLFSWLGHYYAPFYAVSSL), 71–91 (TPTMGGVLILSAIGVSTLLWA), 98–118 (VWILLIVMIIFGAVGWADDWL), 134–154 (YFWLSMGALFVGISLYYIATL), 176–196 (MIPFSAVPFGIGFIIFTYFVI), 211–231 (GLAILPVVLVAAGLGAMAYVS), 251–271 (VIIVCGAMIGAGLGFLWFNAH), 275–295 (VFMGDVGALSLGAMLGTIAVM), 300–320 (IAFAIMGGLFVAEALSVMLQV), and 349–369 (QVVARFWIIAIILVILGLMTL).

It belongs to the glycosyltransferase 4 family. MraY subfamily. Requires Mg(2+) as cofactor.

The protein resides in the cell inner membrane. The enzyme catalyses UDP-N-acetyl-alpha-D-muramoyl-L-alanyl-gamma-D-glutamyl-meso-2,6-diaminopimeloyl-D-alanyl-D-alanine + di-trans,octa-cis-undecaprenyl phosphate = di-trans,octa-cis-undecaprenyl diphospho-N-acetyl-alpha-D-muramoyl-L-alanyl-D-glutamyl-meso-2,6-diaminopimeloyl-D-alanyl-D-alanine + UMP. It participates in cell wall biogenesis; peptidoglycan biosynthesis. Its function is as follows. Catalyzes the initial step of the lipid cycle reactions in the biosynthesis of the cell wall peptidoglycan: transfers peptidoglycan precursor phospho-MurNAc-pentapeptide from UDP-MurNAc-pentapeptide onto the lipid carrier undecaprenyl phosphate, yielding undecaprenyl-pyrophosphoryl-MurNAc-pentapeptide, known as lipid I. The polypeptide is Phospho-N-acetylmuramoyl-pentapeptide-transferase (Psychrobacter cryohalolentis (strain ATCC BAA-1226 / DSM 17306 / VKM B-2378 / K5)).